Here is a 672-residue protein sequence, read N- to C-terminus: Probable urocanate hydratase (672 aa).

Residues 128–129 (GG), Gln-206, 253–255 (GMS), Glu-273, 318–319 (NV), 340–344 (QTSLH), 351–352 (YY), Tyr-400, and Gly-592 contribute to the NAD(+) site.

It belongs to the urocanase family. It depends on NAD(+) as a cofactor.

The catalysed reaction is 4-imidazolone-5-propanoate = trans-urocanate + H2O. Its pathway is amino-acid degradation; L-histidine degradation into L-glutamate; N-formimidoyl-L-glutamate from L-histidine: step 2/3. The chain is Probable urocanate hydratase (uroc1) from Dictyostelium discoideum (Social amoeba).